The following is a 523-amino-acid chain: 2-isopropylmalate synthase (523 aa).

The Pyruvate carboxyltransferase domain occupies 5-267 (VIIFDTTLRD…ETGINAKEIH (263 aa)). 4 residues coordinate Mn(2+): Asp-14, His-202, His-204, and Asn-238. A regulatory domain region spans residues 392–523 (KLAQLVVHSD…QKDRSELGGV (132 aa)).

Belongs to the alpha-IPM synthase/homocitrate synthase family. LeuA type 1 subfamily. In terms of assembly, homodimer. The cofactor is Mn(2+).

It localises to the cytoplasm. It catalyses the reaction 3-methyl-2-oxobutanoate + acetyl-CoA + H2O = (2S)-2-isopropylmalate + CoA + H(+). Its pathway is amino-acid biosynthesis; L-leucine biosynthesis; L-leucine from 3-methyl-2-oxobutanoate: step 1/4. Its function is as follows. Catalyzes the condensation of the acetyl group of acetyl-CoA with 3-methyl-2-oxobutanoate (2-ketoisovalerate) to form 3-carboxy-3-hydroxy-4-methylpentanoate (2-isopropylmalate). This chain is 2-isopropylmalate synthase, found in Shewanella sediminis (strain HAW-EB3).